Here is a 323-residue protein sequence, read N- to C-terminus: tRNA U34 carboxymethyltransferase (323 aa).

Residues K91, W105, K110, G130, 152 to 154 (DPS), 181 to 182 (IE), M196, Y200, and R315 contribute to the carboxy-S-adenosyl-L-methionine site.

The protein belongs to the class I-like SAM-binding methyltransferase superfamily. CmoB family. In terms of assembly, homotetramer.

The catalysed reaction is carboxy-S-adenosyl-L-methionine + 5-hydroxyuridine(34) in tRNA = 5-carboxymethoxyuridine(34) in tRNA + S-adenosyl-L-homocysteine + H(+). Its function is as follows. Catalyzes carboxymethyl transfer from carboxy-S-adenosyl-L-methionine (Cx-SAM) to 5-hydroxyuridine (ho5U) to form 5-carboxymethoxyuridine (cmo5U) at position 34 in tRNAs. In Vibrio cholerae serotype O1 (strain ATCC 39541 / Classical Ogawa 395 / O395), this protein is tRNA U34 carboxymethyltransferase.